The sequence spans 1070 residues: DNA-directed RNA polymerase subunit beta (1070 aa).

Belongs to the RNA polymerase beta chain family. As to quaternary structure, in plastids the minimal PEP RNA polymerase catalytic core is composed of four subunits: alpha, beta, beta', and beta''. When a (nuclear-encoded) sigma factor is associated with the core the holoenzyme is formed, which can initiate transcription.

The protein localises to the plastid. The protein resides in the chloroplast. The catalysed reaction is RNA(n) + a ribonucleoside 5'-triphosphate = RNA(n+1) + diphosphate. Its function is as follows. DNA-dependent RNA polymerase catalyzes the transcription of DNA into RNA using the four ribonucleoside triphosphates as substrates. In Platanus occidentalis (Sycamore), this protein is DNA-directed RNA polymerase subunit beta.